The primary structure comprises 446 residues: Chromogranin-A (446 aa).

An N-terminal signal peptide occupies residues 1–16 (SAAALALLLCAGQVIA). A disulfide bridge links Cys-33 with Cys-54. Positions 85–426 (AKERSHQQKK…RPEDQELESL (342 aa)) are disordered. Ser-97 is subject to Phosphoserine. Residues 105–138 (VLEKQNDQAELKEGTEEASSKEAAEKRGDSKEVE) are compositionally biased toward basic and acidic residues. The segment covering 160–171 (EAEDQTPGEEEA) has biased composition (acidic residues). Ser-209 carries the phosphoserine modification. The segment covering 226–243 (AGEKAVPEEEGPRSEAFD) has biased composition (basic and acidic residues). Ser-286 carries the phosphoserine modification. Gly-304 carries the glycine amide modification. A Phosphoserine modification is found at Ser-319. Residues 319 to 346 (SEEWENAKRWSKMDRLAKELTAEKRLQG) show a composition bias toward basic and acidic residues. A compositionally biased stretch (acidic residues) spans 347–357 (EEEEEEEEEDP). Residue Ser-360 is modified to Phosphoserine. Residue Met-361 is modified to Methionine sulfoxide. Ser-387, Ser-391, Ser-413, and Ser-427 each carry phosphoserine. Residues 403-420 (YLEEKKEEEGSANRRPED) are compositionally biased toward basic and acidic residues. Ser-413 carries an O-linked (Xyl...) (chondroitin sulfate) serine glycan.

This sequence belongs to the chromogranin/secretogranin protein family. As to quaternary structure, self-interacts; self-assembly is promoted in vitro by chondroitin sulfate attachment which occurs at mildly acidic pH conditions. Interacts with SCG3. Interacts with ITPR1 in the secretory granules. Post-translationally, O-glycosylated; contains chondroitin sulfate (CS). CS attachment is pH-dependent, being observed at mildly acidic conditions of pH 5 but not at neutral pH, and promotes self-assembly in vitro. Parathyroid CHGA is sulfated on tyrosine residues, whereas adrenal CHGA seems to be mainly sulfated on oligosaccharide residues.

Its subcellular location is the secreted. The protein resides in the cytoplasmic vesicle. The protein localises to the secretory vesicle. It is found in the neuronal dense core vesicle. Its function is as follows. Strongly inhibits glucose induced insulin release from the pancreas. In terms of biological role, inhibits low calcium-stimulated parathyroid cell secretion. Inhibits catecholamine release from chromaffin cells and noradrenergic neurons by acting as a non-competitive nicotinic cholinergic antagonist. Can induce mast cell migration, degranulation and production of cytokines and chemokines. Functionally, regulates granule biogenesis in endocrine cells by up-regulating the transcription of protease nexin 1 (SERPINE2) via a cAMP-PKA-SP1 pathway. This leads to inhibition of granule protein degradation in the Golgi complex which in turn promotes granule formation. The polypeptide is Chromogranin-A (CHGA) (Sus scrofa (Pig)).